A 381-amino-acid polypeptide reads, in one-letter code: Sulfate adenylyltransferase (381 aa).

It belongs to the sulfate adenylyltransferase family.

The catalysed reaction is sulfate + ATP + H(+) = adenosine 5'-phosphosulfate + diphosphate. Its pathway is sulfur metabolism; hydrogen sulfide biosynthesis; sulfite from sulfate: step 1/3. The protein is Sulfate adenylyltransferase of Carboxydothermus hydrogenoformans (strain ATCC BAA-161 / DSM 6008 / Z-2901).